The sequence spans 326 residues: MTQSRSATPGPSLDFERELMELETRLDDIRRFAEENNVDVSTQLAEIEARAAELRRDLYANLPPKDILQLARNPKRPSTLDYIQLLCEDWVELHGDRLFGDDLALVGGLARLGDHPVVIMGHQKGRDTKDNIQRNFGMPQPEGYRKALRLMDHANHFQLPIIALIDTPGAHAGVDAEQRGQGEAIARNLQHMFSYEVPILCAVIGEGGSGGALAIGVGNRMLMFEYAVYSVISPDSCSVILWRDKKHIEQAANALKITARDLKQLGIVDEIIPEPSGGAHRDPQRAAANLKEALLRHLDELLTLDGPTRRTQRYEKFRAMARFQEI.

Residues Glu-46 to Glu-300 form the CoA carboxyltransferase C-terminal domain.

It belongs to the AccA family. Acetyl-CoA carboxylase is a heterohexamer composed of biotin carboxyl carrier protein (AccB), biotin carboxylase (AccC) and two subunits each of ACCase subunit alpha (AccA) and ACCase subunit beta (AccD).

The protein resides in the cytoplasm. It carries out the reaction N(6)-carboxybiotinyl-L-lysyl-[protein] + acetyl-CoA = N(6)-biotinyl-L-lysyl-[protein] + malonyl-CoA. It functions in the pathway lipid metabolism; malonyl-CoA biosynthesis; malonyl-CoA from acetyl-CoA: step 1/1. Functionally, component of the acetyl coenzyme A carboxylase (ACC) complex. First, biotin carboxylase catalyzes the carboxylation of biotin on its carrier protein (BCCP) and then the CO(2) group is transferred by the carboxyltransferase to acetyl-CoA to form malonyl-CoA. The polypeptide is Acetyl-coenzyme A carboxylase carboxyl transferase subunit alpha (Gloeobacter violaceus (strain ATCC 29082 / PCC 7421)).